Reading from the N-terminus, the 304-residue chain is Killer cell immunoglobulin-like receptor 2DS1 (304 aa).

The signal sequence occupies residues 1 to 21 (MSLTVVSMACVGFFLLQGAWP). The Extracellular segment spans residues 22 to 245 (HEGVHRKPSL…SETGNPRHLH (224 aa)). Ig-like C2-type domains are found at residues 42-107 (EETV…VTHS) and 142-205 (GENV…FRDS). A disulfide bridge connects residues cysteine 49 and cysteine 100. Asparagine 67, asparagine 84, asparagine 144, and asparagine 178 each carry an N-linked (GlcNAc...) asparagine glycan. Cysteine 149 and cysteine 198 are disulfide-bonded. A disordered region spans residues 220–239 (VTGNPSNSWPSPTEPSSETG). A compositionally biased stretch (low complexity) spans 223-239 (NPSNSWPSPTEPSSETG). Residues 246-264 (VLIGTSVVKIPFTILLFFL) traverse the membrane as a helical segment. Topologically, residues 265 to 304 (LHRWCSDKKNAAVMDQEPAGNRTVNSEDSDEQDHQEVSYA) are cytoplasmic. The interval 280–304 (QEPAGNRTVNSEDSDEQDHQEVSYA) is disordered.

Belongs to the immunoglobulin superfamily. In terms of assembly, interacts with the adapter protein TYROBP/DAP12; the interaction enhances KIR2DS1 stability at the cell surface. In terms of tissue distribution, expressed by NK cells.

The protein resides in the cell membrane. In terms of biological role, receptor on natural killer (NK) cells for some HLA-C alleles such as w6. Does not inhibit the activity of NK cells. The sequence is that of Killer cell immunoglobulin-like receptor 2DS1 from Homo sapiens (Human).